The chain runs to 266 residues: 3-methyl-2-oxobutanoate hydroxymethyltransferase (266 aa).

Residues aspartate 43 and aspartate 82 each coordinate Mg(2+). Residues 43–44, aspartate 82, and lysine 110 contribute to the 3-methyl-2-oxobutanoate site; that span reads DS. Glutamate 112 is a binding site for Mg(2+). Glutamate 179 acts as the Proton acceptor in catalysis.

It belongs to the PanB family. In terms of assembly, homodecamer; pentamer of dimers. It depends on Mg(2+) as a cofactor.

The protein localises to the cytoplasm. The enzyme catalyses 3-methyl-2-oxobutanoate + (6R)-5,10-methylene-5,6,7,8-tetrahydrofolate + H2O = 2-dehydropantoate + (6S)-5,6,7,8-tetrahydrofolate. It functions in the pathway cofactor biosynthesis; (R)-pantothenate biosynthesis; (R)-pantoate from 3-methyl-2-oxobutanoate: step 1/2. Catalyzes the reversible reaction in which hydroxymethyl group from 5,10-methylenetetrahydrofolate is transferred onto alpha-ketoisovalerate to form ketopantoate. The polypeptide is 3-methyl-2-oxobutanoate hydroxymethyltransferase (Psychrobacter cryohalolentis (strain ATCC BAA-1226 / DSM 17306 / VKM B-2378 / K5)).